A 253-amino-acid chain; its full sequence is E3 ubiquitin-protein ligase MARCHF3 (253 aa).

The segment at serine 63–glutamate 123 adopts an RING-CH-type zinc-finger fold. 8 residues coordinate Zn(2+): cysteine 71, cysteine 74, cysteine 87, cysteine 89, histidine 97, cysteine 100, cysteine 113, and cysteine 116. 2 consecutive transmembrane segments (helical) span residues leucine 145–leucine 165 and alanine 182–valine 202. A phosphoserine mark is found at serine 237 and serine 243.

In terms of assembly, interacts with MARCHF2 and STX6.

The protein resides in the cytoplasmic vesicle membrane. The protein localises to the early endosome membrane. It catalyses the reaction S-ubiquitinyl-[E2 ubiquitin-conjugating enzyme]-L-cysteine + [acceptor protein]-L-lysine = [E2 ubiquitin-conjugating enzyme]-L-cysteine + N(6)-ubiquitinyl-[acceptor protein]-L-lysine.. Its pathway is protein modification; protein ubiquitination. Its function is as follows. E3 ubiquitin-protein ligase which may be involved in endosomal trafficking. E3 ubiquitin ligases accept ubiquitin from an E2 ubiquitin-conjugating enzyme in the form of a thioester and then directly transfer the ubiquitin to targeted substrates. This Bos taurus (Bovine) protein is E3 ubiquitin-protein ligase MARCHF3 (MARCHF3).